Reading from the N-terminus, the 416-residue chain is 3-isopropylmalate dehydratase large subunit (416 aa).

The [4Fe-4S] cluster site is built by cysteine 299, cysteine 357, and cysteine 360.

It belongs to the aconitase/IPM isomerase family. LeuC type 2 subfamily. Heterodimer of LeuC and LeuD. It depends on [4Fe-4S] cluster as a cofactor.

It carries out the reaction (2R,3S)-3-isopropylmalate = (2S)-2-isopropylmalate. The protein operates within amino-acid biosynthesis; L-leucine biosynthesis; L-leucine from 3-methyl-2-oxobutanoate: step 2/4. In terms of biological role, catalyzes the isomerization between 2-isopropylmalate and 3-isopropylmalate, via the formation of 2-isopropylmaleate. This chain is 3-isopropylmalate dehydratase large subunit, found in Saccharolobus solfataricus (strain ATCC 35092 / DSM 1617 / JCM 11322 / P2) (Sulfolobus solfataricus).